A 195-amino-acid polypeptide reads, in one-letter code: Probable GTP-binding protein EngB (195 aa).

In terms of domain architecture, EngB-type G spans 24-195 (ELPEIALAGR…EAWDAILEKL (172 aa)). GTP contacts are provided by residues 32–39 (GRSNVGKS), 59–63 (GKTQL), 77–80 (DVPG), 144–147 (TKAD), and 176–178 (FSS). Mg(2+) is bound by residues S39 and T61.

Belongs to the TRAFAC class TrmE-Era-EngA-EngB-Septin-like GTPase superfamily. EngB GTPase family. Mg(2+) serves as cofactor.

In terms of biological role, necessary for normal cell division and for the maintenance of normal septation. The sequence is that of Probable GTP-binding protein EngB from Streptococcus pneumoniae serotype 4 (strain ATCC BAA-334 / TIGR4).